A 317-amino-acid chain; its full sequence is Putative S-adenosyl-L-methionine-dependent methyltransferase MSMEG_0093 (317 aa).

S-adenosyl-L-methionine is bound by residues aspartate 134 and 163–164 (DL).

This sequence belongs to the UPF0677 family.

In terms of biological role, exhibits S-adenosyl-L-methionine-dependent methyltransferase activity. The protein is Putative S-adenosyl-L-methionine-dependent methyltransferase MSMEG_0093 of Mycolicibacterium smegmatis (strain ATCC 700084 / mc(2)155) (Mycobacterium smegmatis).